A 191-amino-acid polypeptide reads, in one-letter code: Ribosomal RNA small subunit methyltransferase G (191 aa).

S-adenosyl-L-methionine contacts are provided by residues Gly-59, 111 to 112, and Arg-124; that span reads IE.

It belongs to the methyltransferase superfamily. RNA methyltransferase RsmG family.

The protein localises to the cytoplasm. Specifically methylates the N7 position of a guanine in 16S rRNA. This Mycoplasma pneumoniae (strain ATCC 29342 / M129 / Subtype 1) (Mycoplasmoides pneumoniae) protein is Ribosomal RNA small subunit methyltransferase G.